The following is a 306-amino-acid chain: Tyrosine recombinase XerC (306 aa).

Residues 10 to 94 enclose the Core-binding (CB) domain; sequence ARCHSYLQQF…AVKQWGEFLL (85 aa). Positions 115-294 constitute a Tyr recombinase domain; it reads PLPKNIDVDS…DFQHLAKVYD (180 aa). Catalysis depends on residues R154, K178, H246, R249, and H272. Y281 (O-(3'-phospho-DNA)-tyrosine intermediate) is an active-site residue.

The protein belongs to the 'phage' integrase family. XerC subfamily. In terms of assembly, forms a cyclic heterotetrameric complex composed of two molecules of XerC and two molecules of XerD.

It localises to the cytoplasm. Functionally, site-specific tyrosine recombinase, which acts by catalyzing the cutting and rejoining of the recombining DNA molecules. The XerC-XerD complex is essential to convert dimers of the bacterial chromosome into monomers to permit their segregation at cell division. It also contributes to the segregational stability of plasmids. In Shewanella oneidensis (strain ATCC 700550 / JCM 31522 / CIP 106686 / LMG 19005 / NCIMB 14063 / MR-1), this protein is Tyrosine recombinase XerC.